Reading from the N-terminus, the 1478-residue chain is Serine/threonine-protein kinase BCK1/SLK1/SSP31 (1478 aa).

Disordered stretches follow at residues 1–70 (MPFL…TSSQ), 99–126 (TSFTNSSYKNDNGPSSLSDSRKSSGGNS), 217–359 (NVTN…RRHH), and 373–427 (FGSG…KGNL). A compositionally biased stretch (low complexity) spans 29–49 (PTSSVASTKSSSKSPRATSRK). Composition is skewed to polar residues over residues 58–70 (QFPNLTPNSTSSQ) and 99–110 (TSFTNSSYKNDN). Low complexity predominate over residues 111-126 (GPSSLSDSRKSSGGNS). Over residues 223–233 (IRQKSASKLKS) the composition is skewed to basic residues. Polar residues-rich tracts occupy residues 253–273 (DISNSRSTSESALSPTKSGPS) and 281–297 (LHSTSTHQKTKSASSLY). Low complexity-rich tracts occupy residues 298–320 (RRSFISLRGSSSSNASSAKSPSN) and 342–353 (SASPPASPSYPS). Composition is skewed to polar residues over residues 386-396 (NPQGHSLSSEN) and 407-420 (TNVSSPLKQSSLPT). T407 is subject to Phosphothreonine. Phosphoserine occurs at positions 411 and 491. The segment at 644–671 (KPKPAPLTSENNVPLKSVKSKSSMRSGT) is disordered. The span at 659–671 (KSVKSKSSMRSGT) shows a compositional bias: low complexity. Phosphoserine is present on S747. Disordered regions lie at residues 752 to 877 (LNLP…ASTH), 895 to 939 (KTDQ…RGNS), 960 to 1021 (ADAP…TQDK), and 1053 to 1116 (TEGI…TPKR). Residues 765 to 777 (TPITENESKSSFQ) show a composition bias toward polar residues. Residues 779–809 (LRKDEGTEIDFNHRRESPYTKPELAPKREAP) show a composition bias toward basic and acidic residues. Positions 813-827 (ANTSPQRTLSTSKQN) are enriched in polar residues. S816 bears the Phosphoserine mark. 2 stretches are compositionally biased toward low complexity: residues 851-870 (QLLSSPIEASSSSPDSLTSS) and 914-925 (NRSNSTVSTSNS). Residues 967-977 (DSDDSDDDSSS) show a composition bias toward acidic residues. Basic and acidic residues predominate over residues 994 to 1011 (NENKKDEKSDNSSTHSDE). A phosphoserine mark is found at S1058 and S1061. Over residues 1058–1083 (SPTSPKSLDSLLSPKNVASSRTEPST) the composition is skewed to low complexity. At S1134 the chain carries Phosphoserine; by PKC. The region spanning 1175 to 1440 (WMKGEMIGKG…ANELLSHPFS (266 aa)) is the Protein kinase domain. ATP-binding positions include 1181 to 1189 (IGKGSFGAV) and K1204. The active-site Proton acceptor is D1303.

Belongs to the protein kinase superfamily. STE Ser/Thr protein kinase family. MAP kinase kinase kinase subfamily.

It is found in the cytoplasm. The enzyme catalyses L-seryl-[protein] + ATP = O-phospho-L-seryl-[protein] + ADP + H(+). The catalysed reaction is L-threonyl-[protein] + ATP = O-phospho-L-threonyl-[protein] + ADP + H(+). Serine/threonine protein kinase involved in a signal transduction pathway that plays a role in yeast cell morphogenesis and cell growth. This pathway seems to start by SMP3; then involve the kinase PKC1 that may act on this kinase. BCK1 probably phosphorylates MKK1 and MKK2 which themselves phosphorylate the MPK1 kinase. The sequence is that of Serine/threonine-protein kinase BCK1/SLK1/SSP31 (BCK1) from Saccharomyces cerevisiae (strain ATCC 204508 / S288c) (Baker's yeast).